A 448-amino-acid polypeptide reads, in one-letter code: Binary larvicide subunit BinB (448 aa).

The interval 1–198 (MCDSKDNSGV…TAFVNSSFYA (198 aa)) is beta-trefoil domain. C67 and C161 are oxidised to a cystine. Residues 199–448 (AAIPQLPQTS…NEELIPKINQ (250 aa)) form a probable pore-forming domain region.

Belongs to the toxin_10 family. Forms a heterodimer with BinA. Upon toxin crystal solubilization with NaOH at pH 12, only the 63-kDa (binB) and 43-kDa (binA) proteins were detected. Interacts with mosquito protein Cpm1 which acts as its host receptor. In terms of processing, processed by proteases extracted from C.pipiens larval gut; unlike its partner BinA, it does not form a stable digestion product.

It localises to the spore. The protein resides in the perispore. Component of a binary toxin active against Culex and some Aedes mosquito larvae. This subunit alone has no toxic larvicidal activity. This subunit is responsible for localized binding to specific regions of the host larval gut. Binary toxin internalization into host gut cells requires both proteins. This Lysinibacillus sphaericus (Bacillus sphaericus) protein is Binary larvicide subunit BinB (binB).